We begin with the raw amino-acid sequence, 134 residues long: ATP synthase epsilon chain (134 aa).

This sequence belongs to the ATPase epsilon chain family. As to quaternary structure, F-type ATPases have 2 components, CF(1) - the catalytic core - and CF(0) - the membrane proton channel. CF(1) has five subunits: alpha(3), beta(3), gamma(1), delta(1), epsilon(1). CF(0) has three main subunits: a, b and c.

Its subcellular location is the cell inner membrane. Produces ATP from ADP in the presence of a proton gradient across the membrane. The polypeptide is ATP synthase epsilon chain (Nitratidesulfovibrio vulgaris (strain ATCC 29579 / DSM 644 / CCUG 34227 / NCIMB 8303 / VKM B-1760 / Hildenborough) (Desulfovibrio vulgaris)).